We begin with the raw amino-acid sequence, 325 residues long: Diadenosine 5',5'''-P1,P4-tetraphosphate phosphorylase 2 (325 aa).

Substrate-binding positions include Lys-53, 92 to 93, Asn-148, and 154 to 157; these read NK and GSSQ. Residue His-161 is the Nucleophile of the active site. Substrate contacts are provided by residues Gln-163, 277–279, Met-284, and Lys-288; that span reads NST.

The protein belongs to the ATP adenylyltransferase family. Monomer. It depends on a divalent metal cation as a cofactor.

Its subcellular location is the cytoplasm. The protein localises to the nucleus. The catalysed reaction is ADP + ATP + H(+) = P(1),P(4)-bis(5'-adenosyl) tetraphosphate + phosphate. It carries out the reaction sulfate + ADP + H(+) = adenosine 5'-phosphosulfate + phosphate. Functionally, ap4A phosphorylase catalyzes the phosphorolytic degradation of bis(5'-adenosyl) tetraphosphate (Ap4A) into ADP and ATP. Can also use other Np4N' nucleotides (where N and N' stand for A,C,G or U) as substrates, but prefers A-containing substrates. Cannot catalyze the reverse reaction. Additionally, this enzyme can also catalyze the phosphorolytic degradation of adenosine 5'-phosphosulfate (AMPS) into ADP and sulfate, the reversible exchange reaction between inorganic phosphate and the beta-phosphate of a nucleoside diphosphate (NDP), and the synthesis of Ap4A from AMPS plus ATP. The polypeptide is Diadenosine 5',5'''-P1,P4-tetraphosphate phosphorylase 2 (Saccharomyces cerevisiae (strain ATCC 204508 / S288c) (Baker's yeast)).